Reading from the N-terminus, the 393-residue chain is Enoyl-[acyl-carrier-protein] reductase [NADH] (393 aa).

NAD(+) contacts are provided by residues 48–53, 74–75, 111–112, and 139–140; these read GSSTGY, FE, DA, and LA. Residue Tyr-225 coordinates substrate. Catalysis depends on Tyr-235, which acts as the Proton donor. Residues Lys-244 and 273 to 275 each bind NAD(+); that span reads LVT.

The protein belongs to the TER reductase family. In terms of assembly, monomer.

The catalysed reaction is a 2,3-saturated acyl-[ACP] + NAD(+) = a (2E)-enoyl-[ACP] + NADH + H(+). Its pathway is lipid metabolism; fatty acid biosynthesis. In terms of biological role, involved in the final reduction of the elongation cycle of fatty acid synthesis (FAS II). Catalyzes the reduction of a carbon-carbon double bond in an enoyl moiety that is covalently linked to an acyl carrier protein (ACP). This is Enoyl-[acyl-carrier-protein] reductase [NADH] from Pseudoalteromonas atlantica (strain T6c / ATCC BAA-1087).